Reading from the N-terminus, the 300-residue chain is Mycothiol acetyltransferase (300 aa).

N-acetyltransferase domains lie at 4–140 (IDWR…RPLT) and 151–300 (VRLA…AVAD). D36 provides a ligand contact to 1D-myo-inositol 2-(L-cysteinylamino)-2-deoxy-alpha-D-glucopyranoside. Position 79 to 81 (79 to 81 (LVV)) interacts with acetyl-CoA. 1D-myo-inositol 2-(L-cysteinylamino)-2-deoxy-alpha-D-glucopyranoside is bound by residues E178, K219, and E227. 231–233 (VGV) provides a ligand contact to acetyl-CoA. Residue Y269 participates in 1D-myo-inositol 2-(L-cysteinylamino)-2-deoxy-alpha-D-glucopyranoside binding. Acetyl-CoA is bound at residue 274–279 (NGAAVK).

This sequence belongs to the acetyltransferase family. MshD subfamily. As to quaternary structure, monomer.

The enzyme catalyses 1D-myo-inositol 2-(L-cysteinylamino)-2-deoxy-alpha-D-glucopyranoside + acetyl-CoA = mycothiol + CoA + H(+). In terms of biological role, catalyzes the transfer of acetyl from acetyl-CoA to desacetylmycothiol (Cys-GlcN-Ins) to form mycothiol. In Mycobacterium sp. (strain JLS), this protein is Mycothiol acetyltransferase.